Reading from the N-terminus, the 166-residue chain is Lipoprotein signal peptidase (166 aa).

The next 3 membrane-spanning stretches (helical) occupy residues 12 to 32 (WLWV…LILQ), 70 to 90 (WFFS…MYRS), and 102 to 122 (ALII…GFVV). Catalysis depends on residues aspartate 123 and aspartate 141. Residues 137-157 (FNLADSAICIGAALIVLEGFL) traverse the membrane as a helical segment.

The protein belongs to the peptidase A8 family.

It localises to the cell inner membrane. The enzyme catalyses Release of signal peptides from bacterial membrane prolipoproteins. Hydrolyzes -Xaa-Yaa-Zaa-|-(S,diacylglyceryl)Cys-, in which Xaa is hydrophobic (preferably Leu), and Yaa (Ala or Ser) and Zaa (Gly or Ala) have small, neutral side chains.. It participates in protein modification; lipoprotein biosynthesis (signal peptide cleavage). In terms of biological role, this protein specifically catalyzes the removal of signal peptides from prolipoproteins. The chain is Lipoprotein signal peptidase from Klebsiella pneumoniae subsp. pneumoniae (strain ATCC 700721 / MGH 78578).